We begin with the raw amino-acid sequence, 130 residues long: Small ribosomal subunit protein uS9 (130 aa).

This sequence belongs to the universal ribosomal protein uS9 family.

The polypeptide is Small ribosomal subunit protein uS9 (Colwellia psychrerythraea (strain 34H / ATCC BAA-681) (Vibrio psychroerythus)).